A 342-amino-acid polypeptide reads, in one-letter code: S-adenosylmethionine:tRNA ribosyltransferase-isomerase (342 aa).

This sequence belongs to the QueA family. In terms of assembly, monomer.

Its subcellular location is the cytoplasm. The catalysed reaction is 7-aminomethyl-7-carbaguanosine(34) in tRNA + S-adenosyl-L-methionine = epoxyqueuosine(34) in tRNA + adenine + L-methionine + 2 H(+). Its pathway is tRNA modification; tRNA-queuosine biosynthesis. Its function is as follows. Transfers and isomerizes the ribose moiety from AdoMet to the 7-aminomethyl group of 7-deazaguanine (preQ1-tRNA) to give epoxyqueuosine (oQ-tRNA). The protein is S-adenosylmethionine:tRNA ribosyltransferase-isomerase of Bacillus velezensis (strain DSM 23117 / BGSC 10A6 / LMG 26770 / FZB42) (Bacillus amyloliquefaciens subsp. plantarum).